A 131-amino-acid polypeptide reads, in one-letter code: Lactose permease (131 aa).

The Cytoplasmic segment spans residues 1-13 (MKFSELAPRERHN). Residues 14-34 (FVYFLLFFFFYHFIMSAYFPF) form a helical membrane-spanning segment. Residues 35 to 50 (FPVWLADVNHLTKTET) are Periplasmic-facing. The helical transmembrane segment at 51–71 (GIVFSSISLFAIIFQPVFGLM) threads the bilayer. Residues 72–80 (SDKLGLRKH) lie on the Cytoplasmic side of the membrane. Residues 81 to 101 (LLWTITVLLILFAPFFIFVFS) traverse the membrane as a helical segment. Position 102 (P102) is a topological domain, periplasmic. Residues 103–123 (LLQMNIIAGSLVGGIYLGIVF) form a helical membrane-spanning segment. Residues 124-131 (STAPGVGS) lie on the Cytoplasmic side of the membrane.

This sequence belongs to the major facilitator superfamily. Oligosaccharide:H(+) symporter (OHS) (TC 2.A.1.5) family.

Its subcellular location is the cell inner membrane. The catalysed reaction is lactose(in) + H(+)(in) = lactose(out) + H(+)(out). In terms of biological role, responsible for transport of beta-galactosides into the cell, with the concomitant import of a proton (symport system). The sequence is that of Lactose permease (lacY) from Klebsiella pneumoniae.